The sequence spans 615 residues: DNA mismatch repair protein MutL (615 aa).

The interval 363–397 (FAEPAAREPVAPRYTPAPASGSRPAAPWPNAQPGY) is disordered. Residues 364–391 (AEPAAREPVAPRYTPAPASGSRPAAPWP) are compositionally biased toward low complexity.

It belongs to the DNA mismatch repair MutL/HexB family.

Functionally, this protein is involved in the repair of mismatches in DNA. It is required for dam-dependent methyl-directed DNA mismatch repair. May act as a 'molecular matchmaker', a protein that promotes the formation of a stable complex between two or more DNA-binding proteins in an ATP-dependent manner without itself being part of a final effector complex. This is DNA mismatch repair protein MutL from Escherichia coli O9:H4 (strain HS).